A 298-amino-acid polypeptide reads, in one-letter code: MSNDIDLINRLGPSAMDQDHAYLAFSAMRTSGHRHGAFLDAAATAAKCAIYMTYLEQGQNLRMTGHLHHLEPKRVKIIVEEVRQALTEGKLLKMLGSQEPRYLIQLPYVWLEKYPWQPGRSRVPGTSLTSEEKRQIEQKLPSNLPDAQLVSSFEFLDLIEFLHKRSQEDLPPEHQMPLSQALGEHIKRRLLYSGTVTRIDSPWGMPFYALTRPFYAPADDQERTYIMVEDTARYFRMMKNWAERRRNAMRLLEELDILPENGASYEELDEVIRAWADKYHQDGGIAVVLQTAFGERED.

Ser-152 is an active-site residue.

Belongs to the peptidase S48 family. In terms of assembly, homodimer; disulfide-linked.

Its function is as follows. Controls heterocyst differentiation. Dimerization is required for DNA-binding. Has both a protease and a DNA-binding activity. This chain is DNA-binding transcriptional activator HetR, found in Nostoc sp. (strain PCC 9229).